The following is a 180-amino-acid chain: E3 ubiquitin-protein ligase RNF5 (180 aa).

At Ala2 the chain carries N-acetylalanine. The RING-type zinc-finger motif lies at 27–68; that stretch reads CNICLETAREAVVSVCGHLYCWPCLHQWLETRPERQECPVCK. The disordered stretch occupies residues 79-110; it reads LYGRGSQKPQDPRLKTPPRPQGQRPAPESRGG. Residue Ser84 is modified to Phosphoserine. The residue at position 94 (Thr94) is a Phosphothreonine. Position 107 is a phosphoserine (Ser107). 2 helical membrane-spanning segments follow: residues 118–138 and 160–180; these read GGFHFSFGVGAFPFGFFTTVF and SWQDSLFLFLAIFFFFWLLSI.

This sequence belongs to the RNF5 family. In terms of assembly, interacts with PXN. Interacts with Salmonella typhimurium sopA. Interacts with JKAMP. Interacts with STING1; the interaction of endogenous proteins is dependent on viral infection. Widely expressed.

Its subcellular location is the cell membrane. It is found in the mitochondrion membrane. The protein resides in the endoplasmic reticulum membrane. It catalyses the reaction S-ubiquitinyl-[E2 ubiquitin-conjugating enzyme]-L-cysteine + [acceptor protein]-L-lysine = [E2 ubiquitin-conjugating enzyme]-L-cysteine + N(6)-ubiquitinyl-[acceptor protein]-L-lysine.. It participates in protein modification; protein ubiquitination. Its function is as follows. Membrane-bound E3 ubiquitin-protein ligase that mediates ubiquitination of target proteins. May function together with E2 ubiquitin-conjugating enzymes UBE2D1/UBCH5A and UBE2D2/UBC4. Mediates ubiquitination of PXN/paxillin,thereby regulating cell motility and localization of PXN/paxillin. Catalyzes ubiquitination of Salmonella type III secreted protein sopA. Mediates the 'Lys-63'-linked polyubiquitination of JKAMP thereby regulating JKAMP function by decreasing its association with components of the proteasome and ERAD; the ubiquitination appears to involve E2 ubiquitin-conjugating enzyme UBE2N. Mediates the 'Lys-48'-linked polyubiquitination of STING1 at 'Lys-150' leading to its proteasomal degradation; the ubiquitination occurs in mitochondria after viral transfection and regulates antiviral responses. Catalyzes ubiquitination and subsequent degradation of ATG4B, thereby inhibiting autophagy. The protein is E3 ubiquitin-protein ligase RNF5 of Homo sapiens (Human).